Reading from the N-terminus, the 337-residue chain is 2-oxoglutarate-dependent dioxygenase 19 (337 aa).

Residues 1–25 are disordered; sequence MVAPSRLPSHEEQSAAAAADGSATP. One can recognise a Fe2OG dioxygenase domain in the interval 179-283; the sequence is NLESCFQILV…RMSFVSLIGP (105 aa). Fe cation contacts are provided by His208, Asp210, and His264. Position 274 (Arg274) interacts with 2-oxoglutarate.

This sequence belongs to the iron/ascorbate-dependent oxidoreductase family. Fe(2+) is required as a cofactor. It depends on L-ascorbate as a cofactor. As to expression, expressed in shoots.

The protein localises to the cytoplasm. The catalysed reaction is melatonin + 2-oxoglutarate + O2 = 2-hydroxymelatonin + succinate + CO2. In terms of biological role, involved in melatonin degradation. Catalyzes the hydroxylation of melatonin to produce 2-hydroxymelatonin. This Oryza sativa subsp. japonica (Rice) protein is 2-oxoglutarate-dependent dioxygenase 19.